The following is a 119-amino-acid chain: Large ribosomal subunit protein uL18 (119 aa).

The protein belongs to the universal ribosomal protein uL18 family. As to quaternary structure, part of the 50S ribosomal subunit; part of the 5S rRNA/L5/L18/L25 subcomplex. Contacts the 5S and 23S rRNAs.

Functionally, this is one of the proteins that bind and probably mediate the attachment of the 5S RNA into the large ribosomal subunit, where it forms part of the central protuberance. The chain is Large ribosomal subunit protein uL18 from Chlorobium luteolum (strain DSM 273 / BCRC 81028 / 2530) (Pelodictyon luteolum).